Reading from the N-terminus, the 248-residue chain is Triosephosphate isomerase (248 aa).

9 to 11 (NWK) contributes to the substrate binding site. H94 functions as the Electrophile in the catalytic mechanism. The Proton acceptor role is filled by E166. Substrate-binding positions include G172, S212, and 233-234 (GG).

The protein belongs to the triosephosphate isomerase family. As to quaternary structure, homodimer.

The protein localises to the cytoplasm. The catalysed reaction is D-glyceraldehyde 3-phosphate = dihydroxyacetone phosphate. It participates in carbohydrate biosynthesis; gluconeogenesis. The protein operates within carbohydrate degradation; glycolysis; D-glyceraldehyde 3-phosphate from glycerone phosphate: step 1/1. Functionally, involved in the gluconeogenesis. Catalyzes stereospecifically the conversion of dihydroxyacetone phosphate (DHAP) to D-glyceraldehyde-3-phosphate (G3P). This chain is Triosephosphate isomerase, found in Clostridium beijerinckii (strain ATCC 51743 / NCIMB 8052) (Clostridium acetobutylicum).